Here is a 199-residue protein sequence, read N- to C-terminus: Superoxide dismutase [Fe] (199 aa).

Residues histidine 27, histidine 79, aspartate 161, and histidine 165 each contribute to the Fe cation site.

It belongs to the iron/manganese superoxide dismutase family. As to quaternary structure, homodimer. It depends on Fe cation as a cofactor.

It catalyses the reaction 2 superoxide + 2 H(+) = H2O2 + O2. Destroys superoxide anion radicals which are normally produced within the cells and which are toxic to biological systems. The protein is Superoxide dismutase [Fe] (sodB) of Synechocystis sp. (strain ATCC 27184 / PCC 6803 / Kazusa).